A 393-amino-acid chain; its full sequence is Diphosphomevalonate decarboxylase (393 aa).

(R)-5-diphosphomevalonate is bound by residues 21-24 (YWGK), Arg-77, 156-161 (SGSACR), and Thr-212.

It belongs to the diphosphomevalonate decarboxylase family. As to quaternary structure, homodimer.

It is found in the cytoplasm. It localises to the nucleus. It carries out the reaction (R)-5-diphosphomevalonate + ATP = isopentenyl diphosphate + ADP + phosphate + CO2. Its pathway is isoprenoid biosynthesis; isopentenyl diphosphate biosynthesis via mevalonate pathway; isopentenyl diphosphate from (R)-mevalonate: step 3/3. Functionally, diphosphomevalonate decarboxylase; part of the second module of ergosterol biosynthesis pathway that includes the middle steps of the pathway. Mvd1 converts diphosphomevalonate into isopentenyl diphosphate. The second module is carried out in the vacuole and involves the formation of farnesyl diphosphate, which is also an important intermediate in the biosynthesis of ubiquinone, dolichol, heme and prenylated proteins. Activity by the mevalonate kinase erg12 first converts mevalonate into 5-phosphomevalonate. 5-phosphomevalonate is then further converted to 5-diphosphomevalonate by the phosphomevalonate kinase erg8. The diphosphomevalonate decarboxylase mvd1 then produces isopentenyl diphosphate. The isopentenyl-diphosphate delta-isomerase idi1 then catalyzes the 1,3-allylic rearrangement of the homoallylic substrate isopentenyl (IPP) to its highly electrophilic allylic isomer, dimethylallyl diphosphate (DMAPP). Finally the farnesyl diphosphate synthase fps1 catalyzes the sequential condensation of isopentenyl pyrophosphate with dimethylallyl pyrophosphate, and then with the resultant geranylpyrophosphate to the ultimate product farnesyl pyrophosphate. The chain is Diphosphomevalonate decarboxylase (mvd1) from Schizosaccharomyces pombe (strain 972 / ATCC 24843) (Fission yeast).